A 297-amino-acid chain; its full sequence is Transmembrane protein 169 (297 aa).

Residues 1-85 (MEEPTAVEGQ…KEEEGDDFLD (85 aa)) form a disordered region. At 1–159 (MEEPTAVEGQ…CQMGADRGPH (159 aa)) the chain is on the extracellular side. Positions 61–85 (KTDEEPGESEGGDQPKEEEGDDFLD) are enriched in acidic residues. Residues 160–180 (VVLWTLICLPVVFILSFVVSF) form a helical membrane-spanning segment. The Cytoplasmic portion of the chain corresponds to 181–210 (YYGTITWYNIFLVYNEERTFWHKISYCPCL). The helical transmembrane segment at 211 to 231 (VLFYPVLIMAMASSLGLYAAV) threads the bilayer. The Extracellular segment spans residues 232–297 (VQLSWSWEAW…PIQEVETSTV (66 aa)).

It localises to the membrane. This is Transmembrane protein 169 (TMEM169) from Homo sapiens (Human).